Here is a 352-residue protein sequence, read N- to C-terminus: MPECWDGEHDIETPYGLLHVVIRGSPKGNRPAILTYHDVGLNHKLCFNTFFNFEDMQEITKHFVVCHVDAPGQQVGASQFPQGYQFPSMEQLAAMLPSVVQHFGFKYVIGIGVGAGAYVLAKFALIFPDLVEGLVLMNIDPNGKGWIDWAATKLSGLTSTLPDTVLSHLFSQEELVNNTELVQSYRQQISNVVNQANLQLFWNMYNSRRDLDINRPGTVPNAKTLRCPVMLVVGDNAPAEEGVVECNSKLDPTTTTFLKMADSGGLPQVTQPGKLTEAFKYFLQGMGYIAHLKDRRLSGGAVPSASMTRLARSRTASLTSASSVDGSRPQPCAHSDSSEGMGQVNHTMEVSC.

A phosphoserine mark is found at Lys293, Ser298, Ser317, and Ser323. The disordered stretch occupies residues 301 to 352 (AVPSASMTRLARSRTASLTSASSVDGSRPQPCAHSDSSEGMGQVNHTMEVSC). The segment covering 308–323 (TRLARSRTASLTSASS) has biased composition (low complexity). Residues 338–352 (SEGMGQVNHTMEVSC) are compositionally biased toward polar residues.

This sequence belongs to the NDRG family. In terms of tissue distribution, predominantly expressed in the brain (at protein level). Detected in neurons of various parts of brain, including the olfactory bulb, olfactory tuberculum, cerebral cortex, striatum, hippocampus, dentate gyrus, thalamus, hypothalamus, mesencephalon, cerebellum, pons and medulla oblongata.

It is found in the cytoplasm. The protein localises to the cytosol. Contributes to the maintenance of intracerebral BDNF levels within the normal range, which is necessary for the preservation of spatial learning and the resistance to neuronal cell death caused by ischemic stress. May enhance growth factor-induced ERK1 and ERK2 phosphorylation. May attenuate NGF-promoted ELK1 phosphorylation in a microtubule-dependent manner. The protein is Protein NDRG4 (Ndrg4) of Mus musculus (Mouse).